The chain runs to 467 residues: Gamma-aminobutyric acid receptor subunit gamma-3 (467 aa).

Residues 1-17 form the signal peptide; the sequence is MAAKLLLLLCLFSGLHA. The Extracellular segment spans residues 18-256; it reads RSRRVEEDEN…FELSRRMGYF (239 aa). An N-linked (GlcNAc...) asparagine glycan is attached at Asn110. Cysteines 171 and 185 form a disulfide. Asn228 carries an N-linked (GlcNAc...) asparagine glycan. Residues 257-277 form a helical membrane-spanning segment; the sequence is TIQTYIPCILTVVLSWVSFWI. Topologically, residues 278 to 283 are cytoplasmic; that stretch reads KKDATP. The helical transmembrane segment at 284–303 threads the bilayer; the sequence is ARTTLGITTVLTMTTLSTIA. Topologically, residues 304-311 are extracellular; the sequence is RKSLPRVS. The helical transmembrane segment at 312–332 threads the bilayer; sequence YVTAMDLFVTVCFLFVFAALM. Residues 333 to 446 lie on the Cytoplasmic side of the membrane; that stretch reads EYATLNYYSS…DVSELDSYSR (114 aa). The chain crosses the membrane as a helical span at residues 447 to 467; the sequence is VFFPTSFLLFNLVYWVGYLYL.

The protein belongs to the ligand-gated ion channel (TC 1.A.9) family. Gamma-aminobutyric acid receptor (TC 1.A.9.5) subfamily. GABRG3 sub-subfamily. As to quaternary structure, heteropentamer, formed by a combination of alpha (GABRA1-6), beta (GABRB1-3), gamma (GABRG1-3), delta (GABRD), epsilon (GABRE), rho (GABRR1-3), pi (GABRP) and theta (GABRQ) chains, each subunit exhibiting distinct physiological and pharmacological properties. Post-translationally, may be palmitoylated. Expressed in brain.

The protein localises to the postsynaptic cell membrane. It localises to the cell membrane. The catalysed reaction is chloride(in) = chloride(out). Gamma subunit of the heteropentameric ligand-gated chloride channel gated by gamma-aminobutyric acid (GABA), a major inhibitory neurotransmitter in the brain. GABA-gated chloride channels, also named GABA(A) receptors (GABAAR), consist of five subunits arranged around a central pore and contain GABA active binding site(s) located at the alpha and beta subunit interface(s). When activated by GABA, GABAARs selectively allow the flow of chloride across the cell membrane down their electrochemical gradient. In Mus musculus (Mouse), this protein is Gamma-aminobutyric acid receptor subunit gamma-3.